Consider the following 430-residue polypeptide: MANVVVVGAQWGDEGKGKIVDWLSEQADIVVRFQGGHNAGHTLVINGATYKLALLPSGVLRSGKLSVIGNGVVFDPQAFLDEVGKLQAQGLIISPDNLRVAENVTLILPLHRELDALRESSNTGTAIGTTRRGIGPAYEDKVGRRAIRLMDLADLDTLPHKIDRLLAHHNALRRGLGLELIDGAEILRELTAVAPKLLPYAETVWRLLDIKRREGKRLLFEGAQGALLDVDHGTYPYVTSSNTVAAQAATGAGLGPGAIGYVLGLCKAYTTRVGQGPFPTEQDNETGRKIGERGREFGTNTGRPRRCGWFDAVLVRQAVRTCGINGLALTKLDILDGFDTIEVCTGYRLDGKEIDHFPAGEGAQARVEPIYETIEGWKQPTANARSWADLPAQAIKYVRRIEELVGCPIALLSTSPEREDTILVQNPFEA.

GTP is bound by residues G12 to K18 and G40 to T42. Residue D13 is the Proton acceptor of the active site. The Mg(2+) site is built by D13 and G40. Residues D13–K16, N38–H41, T130, R144, Q224, and T239 contribute to the IMP site. Catalysis depends on H41, which acts as the Proton donor. Positions P277–F297 are disordered. A compositionally biased stretch (basic and acidic residues) spans E285–E296. Residue T299–R305 coordinates substrate. An IMP-binding site is contributed by R303. GTP-binding positions include R305, K331–D333, and S413–S415.

The protein belongs to the adenylosuccinate synthetase family. As to quaternary structure, homodimer. Mg(2+) serves as cofactor.

It is found in the cytoplasm. The catalysed reaction is IMP + L-aspartate + GTP = N(6)-(1,2-dicarboxyethyl)-AMP + GDP + phosphate + 2 H(+). It functions in the pathway purine metabolism; AMP biosynthesis via de novo pathway; AMP from IMP: step 1/2. Its function is as follows. Plays an important role in the de novo pathway of purine nucleotide biosynthesis. Catalyzes the first committed step in the biosynthesis of AMP from IMP. The chain is Adenylosuccinate synthetase from Bradyrhizobium sp. (strain ORS 278).